Consider the following 293-residue polypeptide: Ribosomal RNA small subunit methyltransferase H (293 aa).

S-adenosyl-L-methionine is bound by residues 32-34 (GGH), Asp51, Phe78, Asp99, and Gln106. The disordered stretch occupies residues 271–293 (PGTEEIRENPPSRSAKLRVAKRI).

Belongs to the methyltransferase superfamily. RsmH family.

It localises to the cytoplasm. It carries out the reaction cytidine(1402) in 16S rRNA + S-adenosyl-L-methionine = N(4)-methylcytidine(1402) in 16S rRNA + S-adenosyl-L-homocysteine + H(+). Functionally, specifically methylates the N4 position of cytidine in position 1402 (C1402) of 16S rRNA. The chain is Ribosomal RNA small subunit methyltransferase H from Persephonella marina (strain DSM 14350 / EX-H1).